The chain runs to 333 residues: Cap-specific mRNA (nucleoside-2'-O-)-methyltransferase (333 aa).

Tyrosine 22 provides a ligand contact to mRNA. S-adenosyl-L-methionine is bound by residues glutamine 39, tyrosine 66, glycine 68, glycine 72, aspartate 95, arginine 97, valine 116, and aspartate 138. Residues 169–249 (PVASSLKWRC…NKIVRNKVVV (81 aa)) are binding to NPH-I. The tract at residues 169–333 (PVASSLKWRC…NSKRSVRGNK (165 aa)) is binding to Rap94. Lysine 175 serves as the catalytic For methyltransferase activity. Residues 177-180 (RCPF), aspartate 182, 205-207 (SAE), and glutamate 233 each bind mRNA.

The protein belongs to the class I-like SAM-binding methyltransferase superfamily. Poxvirus/kinetoplastid 2'-O-MTase family. As to quaternary structure, interacts with poly(A) polymerase catalytic subunit OPG063. Interacts with OPG109 and OPG123; these interactions might help linking transcription to capping and polyadenylation.

It is found in the virion. It carries out the reaction a 5'-end (N(7)-methyl 5'-triphosphoguanosine)-ribonucleoside in mRNA + S-adenosyl-L-methionine = a 5'-end (N(7)-methyl 5'-triphosphoguanosine)-(2'-O-methyl-ribonucleoside) in mRNA + S-adenosyl-L-homocysteine + H(+). Displays methyltransferase, positive regulation of the poly(A) polymerase and transcription elongation activities. Involved in the modification of both mRNA ends and in intermediate and late gene positive transcription elongation. At the mRNAs 5' end, methylates the ribose 2' OH group of the first transcribed nucleotide, thereby producing a 2'-O-methylpurine cap. At the 3' end, functions as a processivity factor which stimulates the activity of the viral poly(A) polymerase OPG063 that creates mRNA's poly(A) tail. In the presence of OPG102, OPG063 does not dissociate from the RNA allowing tail elongation to around 250 adenylates. In Homo sapiens (Human), this protein is Cap-specific mRNA (nucleoside-2'-O-)-methyltransferase (OPG102).